A 551-amino-acid polypeptide reads, in one-letter code: Cytochrome c oxidase subunit 1 homolog (551 aa).

Transmembrane regions (helical) follow at residues 14-34 (GELG…VVAA), 40-60 (EYAF…FVIG), and 88-108 (VGTL…VIIA). Residue histidine 132 participates in heme b binding. 8 helical membrane passes run 133 to 153 (TSAV…FYVV), 169 to 189 (FVVL…LLGI), 202 to 222 (ADLW…GTVL), 229 to 249 (IYVA…LHLG), 280 to 300 (GHNA…YYFI), 313 to 333 (LSIV…PHHL), 345 to 365 (LGMT…INGL), and 383 to 403 (MMVV…MMSV). The Cu cation site is built by histidine 281, histidine 331, and histidine 332. Heme b contacts are provided by histidine 419 and histidine 421. Helical transmembrane passes span 424–444 (ALGW…PWLW), 459–479 (FWVS…AGIL), and 513–533 (IGGI…FMTI).

It belongs to the heme-copper respiratory oxidase family. It depends on Cu(2+) as a cofactor. The cofactor is heme b.

The protein resides in the cell membrane. It carries out the reaction 4 Fe(II)-[cytochrome c] + O2 + 8 H(+)(in) = 4 Fe(III)-[cytochrome c] + 2 H2O + 4 H(+)(out). It participates in energy metabolism; oxidative phosphorylation. Functionally, cytochrome c oxidase is the component of the respiratory chain that catalyzes the reduction of oxygen to water. Subunits 1-3 form the functional core of the enzyme complex. Co I is the catalytic subunit of the enzyme. Electrons originating in cytochrome c or a quinol are transferred to the bimetallic center formed by a high-spin heme and copper B. In Azorhizobium caulinodans (strain ATCC 43989 / DSM 5975 / JCM 20966 / LMG 6465 / NBRC 14845 / NCIMB 13405 / ORS 571), this protein is Cytochrome c oxidase subunit 1 homolog (fixN).